Consider the following 211-residue polypeptide: Urease accessory protein UreG (211 aa).

11 to 18 (GPVGAGKT) contacts GTP.

It belongs to the SIMIBI class G3E GTPase family. UreG subfamily. As to quaternary structure, homodimer. UreD, UreF and UreG form a complex that acts as a GTP-hydrolysis-dependent molecular chaperone, activating the urease apoprotein by helping to assemble the nickel containing metallocenter of UreC. The UreE protein probably delivers the nickel.

The protein localises to the cytoplasm. Facilitates the functional incorporation of the urease nickel metallocenter. This process requires GTP hydrolysis, probably effectuated by UreG. The protein is Urease accessory protein UreG of Actinobacillus pleuropneumoniae serotype 5b (strain L20).